Here is a 63-residue protein sequence, read N- to C-terminus: MNNKVNNIKITQIKSAIGCKYDQRLTLIGLGLNKINKSVILENTNSIKGMVKKVKHLLEIKNM.

The protein belongs to the universal ribosomal protein uL30 family. Part of the 50S ribosomal subunit.

In Rickettsia typhi (strain ATCC VR-144 / Wilmington), this protein is Large ribosomal subunit protein uL30.